A 144-amino-acid polypeptide reads, in one-letter code: Small ribosomal subunit protein bS6 (144 aa).

The tract at residues 97 to 144 (EEGPSAMMRKADRDRERDERGGPREGGFRSERGPRRPREEETTASVEE) is disordered. Over residues 105-137 (RKADRDRERDERGGPREGGFRSERGPRRPREEE) the composition is skewed to basic and acidic residues.

Belongs to the bacterial ribosomal protein bS6 family.

Functionally, binds together with bS18 to 16S ribosomal RNA. This chain is Small ribosomal subunit protein bS6, found in Afipia carboxidovorans (strain ATCC 49405 / DSM 1227 / KCTC 32145 / OM5) (Oligotropha carboxidovorans).